The sequence spans 135 residues: Large-conductance mechanosensitive channel (135 aa).

2 helical membrane passes run 10–30 (FAMR…GAFG) and 76–96 (GSFI…FCVI).

This sequence belongs to the MscL family. As to quaternary structure, homopentamer.

The protein localises to the cell inner membrane. Its function is as follows. Channel that opens in response to stretch forces in the membrane lipid bilayer. May participate in the regulation of osmotic pressure changes within the cell. This Campylobacter concisus (strain 13826) protein is Large-conductance mechanosensitive channel.